A 257-amino-acid chain; its full sequence is Ribonuclease HII (257 aa).

An RNase H type-2 domain is found at 70 to 257; sequence EFIAGIDEVG…PIKSMVAGGN (188 aa). Positions 76, 77, and 168 each coordinate a divalent metal cation.

Belongs to the RNase HII family. The cofactor is Mn(2+). Mg(2+) is required as a cofactor.

The protein localises to the cytoplasm. The catalysed reaction is Endonucleolytic cleavage to 5'-phosphomonoester.. In terms of biological role, endonuclease that specifically degrades the RNA of RNA-DNA hybrids. The polypeptide is Ribonuclease HII (Streptococcus suis (strain 98HAH33)).